Here is a 63-residue protein sequence, read N- to C-terminus: uncharacterized protein (63 aa).

This is an uncharacterized protein from Avena byzantina (Oat).